The sequence spans 370 residues: Histidinol-phosphate aminotransferase 1 (370 aa).

An N6-(pyridoxal phosphate)lysine modification is found at Lys-222.

Belongs to the class-II pyridoxal-phosphate-dependent aminotransferase family. Histidinol-phosphate aminotransferase subfamily. In terms of assembly, homodimer. Requires pyridoxal 5'-phosphate as cofactor.

The catalysed reaction is L-histidinol phosphate + 2-oxoglutarate = 3-(imidazol-4-yl)-2-oxopropyl phosphate + L-glutamate. The protein operates within amino-acid biosynthesis; L-histidine biosynthesis; L-histidine from 5-phospho-alpha-D-ribose 1-diphosphate: step 7/9. The chain is Histidinol-phosphate aminotransferase 1 from Bacillus cereus (strain ZK / E33L).